A 353-amino-acid polypeptide reads, in one-letter code: Guanine nucleotide-binding protein subunit alpha (353 aa).

A disordered region spans residues 1-25 (MGCGMSTEDKEGKARNEEIENQLKR). Glycine 2 is lipidated: N-myristoyl glycine. Cysteine 3 is lipidated: S-palmitoyl cysteine. The span at 7–25 (TEDKEGKARNEEIENQLKR) shows a compositional bias: basic and acidic residues. The G-alpha domain occupies 32-353 (NEIKMLLLGA…QENLRLCGLI (322 aa)). Residues 35–48 (KMLLLGAGESGKST) form a G1 motif region. GTP contacts are provided by glutamate 43, serine 44, glycine 45, lysine 46, serine 47, threonine 48, aspartate 150, leucine 175, threonine 181, glycine 203, asparagine 269, lysine 270, aspartate 272, and alanine 325. Mg(2+) is bound at residue serine 47. The interval 173–181 (DVLRSRVKT) is G2 motif. Threonine 181 serves as a coordination point for Mg(2+). The segment at 196–205 (YRMFDVGGQR) is G3 motif. The tract at residues 265 to 272 (ILFLNKID) is G4 motif. Positions 323–328 (TCATDT) are G5 motif.

Belongs to the G-alpha family. G(q) subfamily. In terms of assembly, g proteins are composed of 3 units; alpha, beta and gamma. The alpha chain contains the guanine nucleotide binding site. Requires Mg(2+) as cofactor.

In terms of biological role, guanine nucleotide-binding proteins (G proteins) are involved as modulators or transducers in various transmembrane signaling systems. The protein is Guanine nucleotide-binding protein subunit alpha (fadA) of Emericella nidulans (strain FGSC A4 / ATCC 38163 / CBS 112.46 / NRRL 194 / M139) (Aspergillus nidulans).